We begin with the raw amino-acid sequence, 249 residues long: Proteasome subunit alpha type-7 (249 aa).

Belongs to the peptidase T1A family. The 26S proteasome consists of a 20S proteasome core and two 19S regulatory subunits. The 20S proteasome core is a barrel-shaped complex made of 28 subunits that are arranged in four stacked rings. The two outer rings are each formed by seven alpha subunits, and the two inner rings are formed by seven beta subunits. The proteolytic activity is exerted by three beta-subunits PSMB5, PSMB6 and PSMB7. PSMA7 interacts directly with the PSMG1-PSMG2 heterodimer which promotes 20S proteasome assembly. Interacts with HIF1A. Interacts with RAB7A. Interacts with PRKN. Interacts with ABL1 and ABL2. Interacts with EMAP2. Interacts with MAVS.

Its subcellular location is the cytoplasm. It localises to the nucleus. In terms of biological role, component of the 20S core proteasome complex involved in the proteolytic degradation of most intracellular proteins. This complex plays numerous essential roles within the cell by associating with different regulatory particles. Associated with two 19S regulatory particles, forms the 26S proteasome and thus participates in the ATP-dependent degradation of ubiquitinated proteins. The 26S proteasome plays a key role in the maintenance of protein homeostasis by removing misfolded or damaged proteins that could impair cellular functions, and by removing proteins whose functions are no longer required. Associated with the PA200 or PA28, the 20S proteasome mediates ubiquitin-independent protein degradation. This type of proteolysis is required in several pathways including spermatogenesis (20S-PA200 complex) or generation of a subset of MHC class I-presented antigenic peptides (20S-PA28 complex). Inhibits the transactivation function of HIF-1A under both normoxic and hypoxia-mimicking conditions. The interaction with EMAP2 increases the proteasome-mediated HIF-1A degradation under the hypoxic conditions. Plays a role in hepatitis C virus internal ribosome entry site-mediated translation. Mediates nuclear translocation of the androgen receptor (AR) and thereby enhances androgen-mediated transactivation. Promotes MAVS degradation and thereby negatively regulates MAVS-mediated innate immune response. The polypeptide is Proteasome subunit alpha type-7 (PSMA7) (Gallus gallus (Chicken)).